A 478-amino-acid polypeptide reads, in one-letter code: Quinoprotein glucose dehydrogenase B (478 aa).

The N-terminal stretch at 1–24 (MNKHLLAKIALLSAVQLVTLSAFA) is a signal peptide. D-glucose is bound by residues Q100 and D167. The Proton acceptor role is filled by H168. D-glucose is bound by residues Q192 and R252. The PQQ stretch occupies residues 252–253 (RN). Residues G271, P272, E277, Y287, A293, Y295, D297, and E333 each coordinate Ca(2+). Pyrroloquinoline quinone-binding residues include Y367, T372, and K401. The PQQ stretch occupies residues 430 to 432 (RYR).

Belongs to the PQQ oxidoreductase GdhB family. Homodimer. It depends on pyrroloquinoline quinone as a cofactor. Ca(2+) is required as a cofactor.

The catalysed reaction is a ubiquinone + D-glucose = D-glucono-1,5-lactone + a ubiquinol. In terms of biological role, oxidizes glucose to gluconolactone. The protein is Quinoprotein glucose dehydrogenase B (gdhB) of Acinetobacter calcoaceticus.